The chain runs to 525 residues: Ribosomal protein S6 kinase beta-1 (525 aa).

Positions 1–54 (MRRRRRRDGFYPAPDFRDREAEDMAGVFDIDLDQPEDAGSEDELEEGGQLNESM) are disordered. A TOS motif motif is present at residues 28–32 (FDIDL). A compositionally biased stretch (acidic residues) spans 30–46 (IDLDQPEDAGSEDELEE). In terms of domain architecture, Protein kinase spans 91–352 (FELLRVLGKG…AGEVQAHPFF (262 aa)). ATP contacts are provided by residues 97–105 (LGKGGYGKV) and Lys123. Asp218 (proton acceptor) is an active-site residue. The residue at position 252 (Thr252) is a Phosphothreonine; by PDPK1. The AGC-kinase C-terminal domain occupies 353–423 (RHINWEELLA…VAPSVLESVK (71 aa)). The segment at 380-399 (SQFDSKFTRQTPVDSPDDST) is disordered. Residues 381 to 399 (QFDSKFTRQTPVDSPDDST) are compositionally biased toward polar residues. Ser394 carries the phosphoserine modification. Thr412 is subject to Phosphothreonine; by MTOR, NEK6 and NEK7. Residues 424–525 (EKFSFEPKIR…KRPEHLRMNL (102 aa)) form an autoinhibitory domain region. 2 positions are modified to phosphoserine: Ser434 and Ser441. Position 444 is a phosphothreonine (Thr444). Residues Ser447 and Ser452 each carry the phosphoserine modification. A disordered region spans residues 486-509 (VTTSGEASAPLPIRQPNSGPYKKQ). Lys516 is subject to N6-acetyllysine.

This sequence belongs to the protein kinase superfamily. AGC Ser/Thr protein kinase family. S6 kinase subfamily. Interacts with PPP1R9A/neurabin-1. Interacts with RPTOR. Interacts with IRS1. Interacts with EIF3B and EIF3C. Interacts with TRAF4. Interacts with POLDIP3. Interacts (via N-terminus) with IER5. Post-translationally, phosphorylation at Thr-412 is regulated by mTORC1. The phosphorylation at this site is maintained by an agonist-dependent autophosphorylation mechanism. Activated by phosphorylation at Thr-252 by PDPK1. Dephosphorylation by PPP1CC at Thr-412 in mitochondrion.

It is found in the cytoplasm. The protein localises to the synapse. Its subcellular location is the synaptosome. It localises to the mitochondrion outer membrane. The protein resides in the mitochondrion. It catalyses the reaction L-seryl-[protein] + ATP = O-phospho-L-seryl-[protein] + ADP + H(+). The enzyme catalyses L-threonyl-[protein] + ATP = O-phospho-L-threonyl-[protein] + ADP + H(+). Activation requires multiple phosphorylation events on serine/threonine residues. Activation appears to be first mediated by phosphorylation of multiple sites in the autoinhibitory domain, which facilitates phosphorylation at Thr-412, disrupting the autoinhibitory mechanism and allowing phosphorylation of Thr-252 by PDPK1. The active conformation of the kinase is believed to be stabilized by a mechanism involving three conserved phosphorylation sites located in the kinase domain activation loop (Thr-252) and in the AGC-kinase C-terminal domain (Ser-394 in the middle of the tail/linker region and Thr-412 within a hydrophobic motif at its end). Activated by mTORC1; isoform Alpha I and isoform Alpha II are sensitive to rapamycin, which inhibits activating phosphorylation at Thr-412. Activated by PDPK1. Functionally, serine/threonine-protein kinase that acts downstream of mTOR signaling in response to growth factors and nutrients to promote cell proliferation, cell growth and cell cycle progression. Regulates protein synthesis through phosphorylation of EIF4B, RPS6 and EEF2K, and contributes to cell survival by repressing the pro-apoptotic function of BAD. Under conditions of nutrient depletion, the inactive form associates with the EIF3 translation initiation complex. Upon mitogenic stimulation, phosphorylation by the mechanistic target of rapamycin complex 1 (mTORC1) leads to dissociation from the EIF3 complex and activation. The active form then phosphorylates and activates several substrates in the pre-initiation complex, including the EIF2B complex and the cap-binding complex component EIF4B. Also controls translation initiation by phosphorylating a negative regulator of EIF4A, PDCD4, targeting it for ubiquitination and subsequent proteolysis. Promotes initiation of the pioneer round of protein synthesis by phosphorylating POLDIP3/SKAR. In response to IGF1, activates translation elongation by phosphorylating EEF2 kinase (EEF2K), which leads to its inhibition and thus activation of EEF2. Also plays a role in feedback regulation of mTORC2 by mTORC1 by phosphorylating MAPKAP1/SIN1, MTOR and RICTOR, resulting in the inhibition of mTORC2 and AKT1 signaling. Also involved in feedback regulation of mTORC1 and mTORC2 by phosphorylating DEPTOR. Mediates cell survival by phosphorylating the pro-apoptotic protein BAD and suppressing its pro-apoptotic function. Phosphorylates mitochondrial URI1 leading to dissociation of a URI1-PPP1CC complex. The free mitochondrial PPP1CC can then dephosphorylate RPS6KB1 at Thr-412, which is proposed to be a negative feedback mechanism for the RPS6KB1 anti-apoptotic function. Mediates TNF-alpha-induced insulin resistance by phosphorylating IRS1 at multiple serine residues, resulting in accelerated degradation of IRS1. In cells lacking functional TSC1-2 complex, constitutively phosphorylates and inhibits GSK3B. May be involved in cytoskeletal rearrangement through binding to neurabin. Phosphorylates and activates the pyrimidine biosynthesis enzyme CAD, downstream of MTOR. Following activation by mTORC1, phosphorylates EPRS and thereby plays a key role in fatty acid uptake by adipocytes and also most probably in interferon-gamma-induced translation inhibition. The polypeptide is Ribosomal protein S6 kinase beta-1 (RPS6KB1) (Oryctolagus cuniculus (Rabbit)).